Here is a 546-residue protein sequence, read N- to C-terminus: MAKEIKFSDSARNLLFEGVRQLHDAVKVTMGPRGRNVLIQKSYGAPSITKDGVSVAKEIELSCPVANMGAQLVKEVASKTADAAGDGTTTATVLAYSIFKEGLRNITAGANPIEVKRGMDKAAEAIINELKKASKKVGGKEEITQVATISANSDHNIGKLIADAMEKVGKDGVITVEEAKGIEDELDVVEGMQFDRGYLSPYFVTNAEKMTAQLDNAYILLTDKKISSMKDILPLLEKTMKEGKPLLIIAEDIEGEALTTLVVNKLRGVLNIAAVKAPGFGDRRKEMLKDIAILTGGQVISEELGLSLENAEVEFLGKAGRIVIDKDNTTIVDGKGHSDDVKDRVAQIKTQIASTTSDYDKEKLQERLAKLSGGVAVIKVGAASEVEMKEKKDRVDDALSATKAAVEEGIVIGGGAALIRAAQKVHLNLHDDEKVGYEIIMRAIKAPLAQIAINAGYDGGVVVNEVEKHEGHFGFNASNGKYVDMFKEGIIDPLKVERIALQNAVSVSSLLLTTEATVHEIKEEKAAPAMPDMGGMGGMGGMGGMM.

ATP contacts are provided by residues 29-32, Lys-50, 86-90, Gly-414, and Asp-492; these read TMGP and DGTTT.

It belongs to the chaperonin (HSP60) family. In terms of assembly, forms a cylinder of 14 subunits composed of two heptameric rings stacked back-to-back. Interacts with the co-chaperonin GroES.

The protein resides in the cytoplasm. The enzyme catalyses ATP + H2O + a folded polypeptide = ADP + phosphate + an unfolded polypeptide.. In terms of biological role, together with its co-chaperonin GroES, plays an essential role in assisting protein folding. The GroEL-GroES system forms a nano-cage that allows encapsulation of the non-native substrate proteins and provides a physical environment optimized to promote and accelerate protein folding. The protein is Chaperonin GroEL of Helicobacter pylori (strain HPAG1).